Reading from the N-terminus, the 612-residue chain is UvrABC system protein C (612 aa).

The GIY-YIG domain maps to 20–98; the sequence is THSGVYRMLD…IKQHRPKYNI (79 aa). The region spanning 208 to 243 is the UVR domain; that stretch reads SSVLEEISAKMYQASEDMEYEKAQVYRDQLVVLRKL.

The protein belongs to the UvrC family. In terms of assembly, interacts with UvrB in an incision complex.

The protein localises to the cytoplasm. In terms of biological role, the UvrABC repair system catalyzes the recognition and processing of DNA lesions. UvrC both incises the 5' and 3' sides of the lesion. The N-terminal half is responsible for the 3' incision and the C-terminal half is responsible for the 5' incision. The chain is UvrABC system protein C from Francisella tularensis subsp. tularensis (strain WY96-3418).